A 372-amino-acid polypeptide reads, in one-letter code: Phospho-N-acetylmuramoyl-pentapeptide-transferase (372 aa).

The next 10 membrane-spanning stretches (helical) occupy residues 25–45, 73–93, 98–118, 134–154, 176–196, 211–231, 251–271, 275–295, 300–320, and 349–369; these read RSLL…PIMI, TMGG…WADL, VWIV…DDWI, FFWT…IATQ, SIPL…YLVI, GLAI…AYLS, LVVI…YNAH, VFMG…IAVM, IVFA…FLQI, and QVVI…LMTL.

Belongs to the glycosyltransferase 4 family. MraY subfamily. It depends on Mg(2+) as a cofactor.

Its subcellular location is the cell inner membrane. It catalyses the reaction UDP-N-acetyl-alpha-D-muramoyl-L-alanyl-gamma-D-glutamyl-meso-2,6-diaminopimeloyl-D-alanyl-D-alanine + di-trans,octa-cis-undecaprenyl phosphate = di-trans,octa-cis-undecaprenyl diphospho-N-acetyl-alpha-D-muramoyl-L-alanyl-D-glutamyl-meso-2,6-diaminopimeloyl-D-alanyl-D-alanine + UMP. It participates in cell wall biogenesis; peptidoglycan biosynthesis. In terms of biological role, catalyzes the initial step of the lipid cycle reactions in the biosynthesis of the cell wall peptidoglycan: transfers peptidoglycan precursor phospho-MurNAc-pentapeptide from UDP-MurNAc-pentapeptide onto the lipid carrier undecaprenyl phosphate, yielding undecaprenyl-pyrophosphoryl-MurNAc-pentapeptide, known as lipid I. In Acinetobacter baumannii (strain AB0057), this protein is Phospho-N-acetylmuramoyl-pentapeptide-transferase.